A 152-amino-acid polypeptide reads, in one-letter code: Acidic phospholipase A2 homolog textilotoxin D chain (152 aa).

The signal sequence occupies residues 1–19; that stretch reads MHPAHLLVLLGVCVSLLGA. Cystine bridges form between cysteine 38–cysteine 104, cysteine 54–cysteine 151, cysteine 56–cysteine 72, cysteine 71–cysteine 132, cysteine 78–cysteine 125, cysteine 88–cysteine 118, and cysteine 111–cysteine 123. Residue asparagine 112 is glycosylated (N-linked (GlcNAc...) asparagine).

The protein belongs to the phospholipase A2 family. Group I subfamily. D49 sub-subfamily. In terms of assembly, heterohexamer. 2 forms exist: 2 A or 2 B chains, 2 C chains and 2 covalently-linked D chains, and 1 A or 1 B, 1 C, 2 covalently-linked D chains and 2 differentially glycosylated covalently-linked D chains. Textilotoxin was originally described as pentameric. In terms of tissue distribution, expressed by the venom gland.

The protein resides in the secreted. In terms of biological role, snake venom oligomeric phospholipase A2 that has potent presynaptic neurotoxicity. Chain D is not itself neurotoxic, but it is essential for the neurotoxicity of textilotoxin. Chain D possesses a very low phospholipase activity. In Pseudonaja textilis (Eastern brown snake), this protein is Acidic phospholipase A2 homolog textilotoxin D chain.